Reading from the N-terminus, the 332-residue chain is ADP-L-glycero-D-manno-heptose-6-epimerase (332 aa).

NADP(+) is bound by residues 11-12 (FI), 32-33 (DN), lysine 39, lysine 54, 76-80 (EGACS), and asparagine 93. Residue tyrosine 140 is the Proton acceptor of the active site. Lysine 144 serves as a coordination point for NADP(+). Substrate is bound at residue asparagine 170. NADP(+) is bound by residues valine 171 and lysine 179. Lysine 179 acts as the Proton acceptor in catalysis. Substrate-binding positions include arginine 181, histidine 188, 202–205 (FEGS), arginine 215, and tyrosine 294.

The protein belongs to the NAD(P)-dependent epimerase/dehydratase family. HldD subfamily. In terms of assembly, homopentamer. NADP(+) serves as cofactor.

The enzyme catalyses ADP-D-glycero-beta-D-manno-heptose = ADP-L-glycero-beta-D-manno-heptose. It functions in the pathway nucleotide-sugar biosynthesis; ADP-L-glycero-beta-D-manno-heptose biosynthesis; ADP-L-glycero-beta-D-manno-heptose from D-glycero-beta-D-manno-heptose 7-phosphate: step 4/4. Functionally, catalyzes the interconversion between ADP-D-glycero-beta-D-manno-heptose and ADP-L-glycero-beta-D-manno-heptose via an epimerization at carbon 6 of the heptose. This chain is ADP-L-glycero-D-manno-heptose-6-epimerase, found in Dechloromonas aromatica (strain RCB).